The following is a 518-amino-acid chain: Putative cytochrome P450 CYP13A6 (518 aa).

Cysteine 463 provides a ligand contact to heme.

Belongs to the cytochrome P450 family. Requires heme as cofactor.

In terms of biological role, cytochromes P450 are a group of heme-thiolate monooxygenases. They oxidize a variety of structurally unrelated compounds, including steroids, fatty acids, and xenobiotics. The sequence is that of Putative cytochrome P450 CYP13A6 (cyp-13A6) from Caenorhabditis elegans.